The following is a 373-amino-acid chain: Zinc finger protein CONSTANS-LIKE 10 (373 aa).

Cys-5, Cys-8, Cys-28, His-33, Cys-48, Cys-51, Cys-71, and His-76 together coordinate Zn(2+). A B box-type 1; atypical zinc finger spans residues 5-47 (CDFCGEQRSMVYCRSDAACLCLSCDRNVHSANALSKRHSRTLV). The segment at 48–92 (CERCNAQPASVRCSDERVSLCQNCDWSGHDGKNSTTTSHHKRQTI) adopts a B box-type 2; atypical zinc-finger fold. Residues 152-172 (PETSSAAQGMDHSSVPENSSM) form a disordered region. Positions 316-358 (RNNAVMRYKEKKKARKFDKRVRYVSRKERADVRRRVKGRFVKS) constitute a CCT domain.

This sequence belongs to the CONSTANS family.

It localises to the nucleus. The protein is Zinc finger protein CONSTANS-LIKE 10 (COL10) of Arabidopsis thaliana (Mouse-ear cress).